The following is a 326-amino-acid chain: Ras association domain-containing protein 2 (326 aa).

The segment at 111 to 133 (EVDAPPEGDQMPSSTDSRGLKPL) is disordered. A Ras-associating domain is found at 176 to 264 (YNHKTSVFTP…SKVFLMEKDQ (89 aa)). An SARAH domain is found at 272–319 (VAQYIKFEMPVLKSFIQKLQEEEDREVKKLMRKYTVLRLMIRQRLEEI).

Interacts directly with activated KRAS in a GTP-dependent manner. Interacts (via SARAH domain) with STK3/MST2 and STK4/MST1. Phosphorylated by STK3/MST2 and STK4/MST1. Widely expressed with highest levels in brain, placenta, peripheral blood and lung. Frequently down-regulated in lung tumor cell lines.

It localises to the nucleus. It is found in the cytoplasm. The protein localises to the chromosome. The protein resides in the centromere. Its subcellular location is the kinetochore. Its function is as follows. Potential tumor suppressor. Acts as a KRAS-specific effector protein. May promote apoptosis and cell cycle arrest. Stabilizes STK3/MST2 by protecting it from proteasomal degradation. The protein is Ras association domain-containing protein 2 (RASSF2) of Homo sapiens (Human).